The following is a 774-amino-acid chain: Cilium assembly protein DZIP1L (774 aa).

Residues 166 to 189 (HTCHLCDKTFMNATFLRGHIQRRH) form a C2H2-type zinc finger. Residues 204–450 (LGEVLEELRA…RKVLAALRKN (247 aa)) are a coiled coil. Disordered regions lie at residues 415–435 (MPKA…ASLE), 515–674 (NKEV…ASSG), and 686–774 (KQLE…IPGW). The span at 421–433 (TEEDSSEEELEAS) shows a compositional bias: acidic residues. Phosphoserine occurs at positions 425 and 426. Residues 515-526 (NKEVSSRVKQRW) show a composition bias toward basic and acidic residues. The segment covering 597 to 616 (GPSSTPVSPGSGLSSTPPFS) has biased composition (low complexity).

Belongs to the DZIP C2H2-type zinc-finger protein family. As to quaternary structure, interacts with SEPTIN2.

The protein localises to the cytoplasm. The protein resides in the cytoskeleton. Its subcellular location is the cilium basal body. It localises to the microtubule organizing center. It is found in the centrosome. The protein localises to the centriole. In terms of biological role, involved in primary cilium formation. Probably acts as a transition zone protein required for localization of PKD1/PC1 and PKD2/PC2 to the ciliary membrane. The sequence is that of Cilium assembly protein DZIP1L from Mus musculus (Mouse).